Here is a 118-residue protein sequence, read N- to C-terminus: Putative pterin-4-alpha-carbinolamine dehydratase (118 aa).

Belongs to the pterin-4-alpha-carbinolamine dehydratase family.

The enzyme catalyses (4aS,6R)-4a-hydroxy-L-erythro-5,6,7,8-tetrahydrobiopterin = (6R)-L-erythro-6,7-dihydrobiopterin + H2O. This is Putative pterin-4-alpha-carbinolamine dehydratase from Azotobacter vinelandii (strain DJ / ATCC BAA-1303).